The chain runs to 92 residues: UPF0335 protein BMEI0289 (92 aa).

It belongs to the UPF0335 family.

This is UPF0335 protein BMEI0289 from Brucella melitensis biotype 1 (strain ATCC 23456 / CCUG 17765 / NCTC 10094 / 16M).